We begin with the raw amino-acid sequence, 422 residues long: Serine--tRNA ligase (422 aa).

230-232 (TAE) provides a ligand contact to L-serine. 261-263 (RNE) contributes to the ATP binding site. Glu284 lines the L-serine pocket. 347-350 (EVSS) contributes to the ATP binding site. Ser383 contacts L-serine.

The protein belongs to the class-II aminoacyl-tRNA synthetase family. Type-1 seryl-tRNA synthetase subfamily. In terms of assembly, homodimer. The tRNA molecule binds across the dimer.

The protein resides in the cytoplasm. The catalysed reaction is tRNA(Ser) + L-serine + ATP = L-seryl-tRNA(Ser) + AMP + diphosphate + H(+). It catalyses the reaction tRNA(Sec) + L-serine + ATP = L-seryl-tRNA(Sec) + AMP + diphosphate + H(+). Its pathway is aminoacyl-tRNA biosynthesis; selenocysteinyl-tRNA(Sec) biosynthesis; L-seryl-tRNA(Sec) from L-serine and tRNA(Sec): step 1/1. Its function is as follows. Catalyzes the attachment of serine to tRNA(Ser). Is also able to aminoacylate tRNA(Sec) with serine, to form the misacylated tRNA L-seryl-tRNA(Sec), which will be further converted into selenocysteinyl-tRNA(Sec). This chain is Serine--tRNA ligase, found in Herpetosiphon aurantiacus (strain ATCC 23779 / DSM 785 / 114-95).